Consider the following 147-residue polypeptide: Effector TSP1 (147 aa).

A signal peptide spans 1–19 (MQITKTLVATLFAASTAFA). 2 disulfides stabilise this stretch: Cys44–Cys51 and Cys67–Cys87.

Homodimer.

It is found in the secreted. Stimulates salicylic acid signaling in host plant roots. The sequence is that of Effector TSP1 from Hypocrea virens (strain Gv29-8 / FGSC 10586) (Gliocladium virens).